We begin with the raw amino-acid sequence, 176 residues long: Cell division control protein 31 (176 aa).

Over residues 1-12 the composition is skewed to basic residues; that stretch reads MFANARAKRRSR. Residues 1–21 are disordered; sequence MFANARAKRRSRASSPTPARL. 4 consecutive EF-hand domains span residues 34–69, 70–105, 107–142, and 143–176; these read EQRQ…LGFN, AEKS…KIVE, DPLE…LNEN, and IDDQ…MDEA. Residues Asp47, Asp49, Asp51, and Glu58 each coordinate Ca(2+). The Ca(2+) site is built by Asp156, Asp158, Asp160, Glu162, and Glu167.

The protein belongs to the centrin family. As to quaternary structure, component of the spindle pole body (SPB), acting as the connector of microtubule arrays in the cytoplasm and the nucleoplasm, is involved in nuclear positioning before chromosome segregation, SPB separation, spindle formation, chromosome segregation, nuclear migration into the bud, nuclear reorientation after cytokinesis and nuclear fusion during conjugation. The SPB half-bridge, which is tightly associated with the cytoplasmic side of the nuclear envelope and the SPB, is playing a key role as the starting structure for and in the initiation of SPB duplication in G1. Within the complex, interacts with sad1.

Its subcellular location is the nucleus. Functionally, required for the proper coordination between exit from mitosis and the initiation of septation. Has a role in bipolar spindle formation during spindle pole body (SPB) duplication. Required for the localization of sad1 to the SPB. In Schizosaccharomyces pombe (strain 972 / ATCC 24843) (Fission yeast), this protein is Cell division control protein 31 (cdc31).